The chain runs to 284 residues: MTARIIDGVALSQRIREEVAERAAALTAQGVRPGLAVVLVGEDPASQVYVRNKVAACEKAGLHSVKEQYPADLSEADLLARIDALNRDPSIHGILVQLPLPAHLDSHKVIEAIAPEKDVDGFHISNAGLLMTGQPLFRPCTPYGVMKMLESEGVTLRGAEAVVVGASNIVGKPMAMLLLAAGATVTICNSKTRDLAAQTRRADVLVVATGRPRMITGDMIKPGAVVIDVGINRGDDGKLCGDVDFASAQQVAGAITPVPGGVGPMTIAMLMVNTLQAAERTLTP.

NADP(+)-binding positions include 165 to 167 (GAS), S190, and I231.

Belongs to the tetrahydrofolate dehydrogenase/cyclohydrolase family. As to quaternary structure, homodimer.

The enzyme catalyses (6R)-5,10-methylene-5,6,7,8-tetrahydrofolate + NADP(+) = (6R)-5,10-methenyltetrahydrofolate + NADPH. It catalyses the reaction (6R)-5,10-methenyltetrahydrofolate + H2O = (6R)-10-formyltetrahydrofolate + H(+). It participates in one-carbon metabolism; tetrahydrofolate interconversion. In terms of biological role, catalyzes the oxidation of 5,10-methylenetetrahydrofolate to 5,10-methenyltetrahydrofolate and then the hydrolysis of 5,10-methenyltetrahydrofolate to 10-formyltetrahydrofolate. The polypeptide is Bifunctional protein FolD (Bordetella avium (strain 197N)).